We begin with the raw amino-acid sequence, 1734 residues long: Gag-pol polyprotein (1734 aa).

Gly2 is lipidated: N-myristoyl glycine; by host. Residues 109 to 112 carry the PTAP/PSAP motif motif; the sequence is PTAP. Positions 112 to 217 are disordered; it reads PILPSGPSTQ…STTSRAFPLR (106 aa). Positions 128–132 match the LYPX(n)L motif motif; it reads LYPAF. The PPXY motif signature appears at 161-164; it reads PPPY. At Ser191 the chain carries Phosphoserine; by host. The interaction with host PIAS4 stretch occupies residues 344–392; the sequence is GRSPTNLAKVKGITQGPNESPSAFLERLKEAYRRYTPYDPEDPGQETNV. An interaction with host UBE2I region spans residues 429–434; the sequence is IFNKRE. Basic and acidic residues-rich tracts occupy residues 433–474 and 485–498; these read RETP…REMS and RQDR…RPQL. 2 disordered regions span residues 433–498 and 512–551; these read RETP…RPQL and WAKD…EPRI. The CCHC-type zinc-finger motif lies at 501 to 518; that stretch reads DQCAYCKEKGHWAKDCPK. Residues 560 to 630 enclose the Peptidase A2 domain; sequence VTFLVDTGAQ…CPYPLLGRDL (71 aa). The active-site Protease; shared with dimeric partner is the Asp565. The Reverse transcriptase domain occupies 740-931; the sequence is LDQGILVPCQ…KQVKYLGYLL (192 aa). 7 residues coordinate Mg(2+): Asp808, Asp882, Asp883, Asp1182, Glu1220, Asp1241, and Asp1311. Residues 1173 to 1319 enclose the RNase H type-1 domain; the sequence is PDADHTWYTD…ADQAAREAAI (147 aa). Residues 1386–1426 form an HHCC-type zinc finger; sequence HRLTHLGYQKMKALLDRGESPYYMLNRDKTLQYVADSCTVC. Positions 1443–1601 constitute an Integrase catalytic domain; sequence RGHRPGTHWE…TPYEILYGAP (159 aa). 2 residues coordinate Mg(2+): Asp1454 and Asp1513.

Homohexamer; further associates as homomultimer. The virus core is composed of a lattice formed from hexagonal rings, each containing six capsid monomers. Interacts with mouse UBE2I and mouse PIAS4. As to quaternary structure, interacts (via PPXY motif) with host NEDD4. Interacts (via PSAP motif) with host TSG101. Interacts (via LYPX(n)L motif) with host PDCD6IP. In terms of assembly, the reverse transcriptase is a monomer (Potential). Interacts (via RNase domains) with host release factor ETF1; this interaction is essential for translational readthrough of amber codon between viral gag and pol genes, as well as for viral replication. Homodimer. Mg(2+) serves as cofactor. Ubiquitinated by ITCH. Gag can recruit the ubiquitin ligase Itch in an L domain-independent manner to facilitate virus release via a mechanism that involves Gag ubiquitination. In terms of processing, specific enzymatic cleavages by the viral protease yield mature proteins. The protease is released by autocatalytic cleavage. The polyprotein is cleaved during and after budding, this process is termed maturation. Post-translationally, sumoylated; which is required for virus replication. Phosphorylated on serine residues.

The protein localises to the virion. It is found in the host cell membrane. Its subcellular location is the host late endosome membrane. It localises to the host endosome. The protein resides in the host multivesicular body. The protein localises to the host cytoplasm. It carries out the reaction DNA(n) + a 2'-deoxyribonucleoside 5'-triphosphate = DNA(n+1) + diphosphate. The catalysed reaction is Endonucleolytic cleavage to 5'-phosphomonoester.. With respect to regulation, most efficiently inhibited by Amprenavir, which is able to block Gag-Pol processing in infected cells. In terms of biological role, plays a role in budding and is processed by the viral protease during virion maturation outside the cell. During budding, it recruits, in a PPXY-dependent or independent manner, Nedd4-like ubiquitin ligases that conjugate ubiquitin molecules to Gag-Pol, or to Gag-Pol binding host factors. Interaction with HECT ubiquitin ligases probably links the viral protein to the host ESCRT pathway and facilitates release. Targets Gag and gag-pol polyproteins to the plasma membrane via a multipartite membrane binding signal, that includes its myristoylated N-terminus. Also mediates nuclear localization of the pre-integration complex. Its function is as follows. Constituent of the pre-integration complex (PIC) which tethers the latter to mitotic chromosomes. This allows the integration of the viral genome into the host DNA. Functionally, forms the spherical core of the virion that encapsulates the genomic RNA-nucleocapsid complex. In terms of biological role, involved in the packaging and encapsidation of two copies of the genome. Binds with high affinity to conserved UCUG elements within the packaging signal, located near the 5'-end of the genome. This binding is dependent on genome dimerization. Acts as a nucleic acid chaperone which is involved in rearrangement of nucleic acid secondary structures during gRNA retrotranscription. The aspartyl protease mediates proteolytic cleavages of Gag and Gag-Pol polyproteins during or shortly after the release of the virion from the plasma membrane. Cleavages take place as an ordered, step-wise cascade to yield mature proteins. This process is called maturation. Displays maximal activity during the budding process just prior to particle release from the cell (Potential). Cleaves the translation initiation factor eIF4G leading to the inhibition of host cap-dependent translation. Its function is as follows. RT is a multifunctional enzyme that converts the viral dimeric RNA genome into dsDNA in the cytoplasm, shortly after virus entry into the cell. This enzyme displays a DNA polymerase activity that can copy either DNA or RNA templates, and a ribonuclease H (RNase H) activity that cleaves the RNA strand of RNA-DNA heteroduplexes in a partially processive 3' to 5' endonucleasic mode. Conversion of viral genomic RNA into dsDNA requires many steps. A tRNA binds to the primer-binding site (PBS) situated at the 5' end of the viral RNA. RT uses the 3' end of the tRNA primer to perform a short round of RNA-dependent minus-strand DNA synthesis. The reading proceeds through the U5 region and ends after the repeated (R) region which is present at both ends of viral RNA. The portion of the RNA-DNA heteroduplex is digested by the RNase H, resulting in a ssDNA product attached to the tRNA primer. This ssDNA/tRNA hybridizes with the identical R region situated at the 3' end of viral RNA. This template exchange, known as minus-strand DNA strong stop transfer, can be either intra- or intermolecular. RT uses the 3' end of this newly synthesized short ssDNA to perform the RNA-dependent minus-strand DNA synthesis of the whole template. RNase H digests the RNA template except for a polypurine tract (PPT) situated at the 5' end of the genome. It is not clear if both polymerase and RNase H activities are simultaneous. RNase H probably can proceed both in a polymerase-dependent (RNA cut into small fragments by the same RT performing DNA synthesis) and a polymerase-independent mode (cleavage of remaining RNA fragments by free RTs). Secondly, RT performs DNA-directed plus-strand DNA synthesis using the PPT that has not been removed by RNase H as primers. PPT and tRNA primers are then removed by RNase H. The 3' and 5' ssDNA PBS regions hybridize to form a circular dsDNA intermediate. Strand displacement synthesis by RT to the PBS and PPT ends produces a blunt ended, linear dsDNA copy of the viral genome that includes long terminal repeats (LTRs) at both ends. Functionally, catalyzes viral DNA integration into the host chromosome, by performing a series of DNA cutting and joining reactions. This enzyme activity takes place after virion entry into a cell and reverse transcription of the RNA genome in dsDNA. The first step in the integration process is 3' processing. This step requires a complex comprising the viral genome, matrix protein and integrase. This complex is called the pre-integration complex (PIC). The integrase protein removes 2 nucleotides from each 3' end of the viral DNA, leaving recessed CA OH's at the 3' ends. In the second step that requires cell division, the PIC enters cell nucleus. In the third step, termed strand transfer, the integrase protein joins the previously processed 3' ends to the 5' ends of strands of target cellular DNA at the site of integration. The last step is viral DNA integration into host chromosome. This is Gag-pol polyprotein (gag-pol) from Mus musculus (Mouse).